We begin with the raw amino-acid sequence, 399 residues long: Elongation factor Tu (399 aa).

Residues 10 to 204 form the tr-type G domain; that stretch reads KPHVNIGTIG…AVDANIPEPV (195 aa). The interval 19–26 is G1; that stretch reads GHVDHGKT. Residue 19-26 coordinates GTP; it reads GHVDHGKT. Thr-26 serves as a coordination point for Mg(2+). The G2 stretch occupies residues 60–64; that stretch reads GITIN. A G3 region spans residues 81 to 84; sequence DCPG. Residues 81-85 and 136-139 each bind GTP; these read DCPGH and NKCD. Residues 136-139 are G4; the sequence is NKCD. The tract at residues 174–176 is G5; it reads SGL.

Belongs to the TRAFAC class translation factor GTPase superfamily. Classic translation factor GTPase family. EF-Tu/EF-1A subfamily. In terms of assembly, monomer.

It localises to the cytoplasm. The enzyme catalyses GTP + H2O = GDP + phosphate + H(+). Its function is as follows. GTP hydrolase that promotes the GTP-dependent binding of aminoacyl-tRNA to the A-site of ribosomes during protein biosynthesis. This is Elongation factor Tu from Synechococcus sp. (strain RCC307).